Reading from the N-terminus, the 1220-residue chain is Plasma membrane calcium-transporting ATPase 1 (1220 aa).

Gly-2 is subject to N-acetylglycine. Over 2-105 the chain is Cytoplasmic; that stretch reads GDMANNSVAY…KTFLQLVWEA (104 aa). 2 positions are modified to phosphoserine: Ser-8 and Ser-17. The helical transmembrane segment at 106–126 threads the bilayer; it reads LQDVTLIILEIAAIVSLGLSF. The Extracellular segment spans residues 127-154; sequence YQPPEGDNALCGEVSVGEEEGEGETGWI. Residues 155 to 175 form a helical membrane-spanning segment; it reads EGAAILLSVVCVVLVTAFNDW. The Cytoplasmic segment spans residues 176–366; sequence SKEKQFRGLQ…KEKSVLQGKL (191 aa). A disordered region spans residues 297 to 356; sequence EEEKKDEKKKEKKNKKQDGAIENRNKAKAQDGAAMEMQPLKSEEGGDGDEKDKKKANLPK. 2 stretches are compositionally biased toward basic and acidic residues: residues 312–325 and 337–356; these read KQDG…KAKA and KSEE…NLPK. At Ser-338 the chain carries Phosphoserine. A helical transmembrane segment spans residues 367 to 386; sequence TKLAVQIGKAGLLMSAITVI. Topologically, residues 387–418 are extracellular; the sequence is ILVLYFVIDTFWVQKRPWLAECTPIYIQYFVK. A helical membrane pass occupies residues 419–439; that stretch reads FFIIGVTVLVVAVPEGLPLAV. The Cytoplasmic segment spans residues 440–855; sequence TISLAYSVKK…RNVYDSISKF (416 aa). Asp-475 (4-aspartylphosphate intermediate) is an active-site residue. Asp-475, Thr-477, and Asp-797 together coordinate Mg(2+). The chain crosses the membrane as a helical span at residues 856 to 876; sequence LQFQLTVNVVAVIVAFTGACI. Residues 877–882 lie on the Extracellular side of the membrane; it reads TQDSPL. Residues 883–903 form a helical membrane-spanning segment; sequence KAVQMLWVNLIMDTLASLALA. Over 904–927 the chain is Cytoplasmic; it reads TEPPTESLLLRKPYGRNKPLISRT. The helical transmembrane segment at 928–948 threads the bilayer; sequence MMKNILGHAFYQLVVVFTLLF. The Extracellular segment spans residues 949 to 971; it reads AGEKFFDIDSGRNAPLHAPPSEH. Residues 972–991 form a helical membrane-spanning segment; it reads YTIVFNTFVLMQLFNEINAR. Topologically, residues 992–1005 are cytoplasmic; that stretch reads KIHGERNVFEGIFN. A helical membrane pass occupies residues 1006 to 1027; sequence NAIFCTIVLGTFVVQIIIVQFG. Residues 1028–1039 are Extracellular-facing; that stretch reads GKPFSCSELSIE. A helical transmembrane segment spans residues 1040 to 1060; sequence QWLWSIFLGMGTLLWGQLIST. Topologically, residues 1061-1220 are cytoplasmic; the sequence is IPTSRLKFLK…SPLHSLETSL (160 aa). The calmodulin-binding subdomain A stretch occupies residues 1100–1117; that stretch reads LRRGQILWFRGLNRIQTQ. Thr-1116 carries the post-translational modification Phosphothreonine; by PKC. A required for basolateral membrane targeting region spans residues 1118–1220; it reads IRVVNAFRSS…SPLHSLETSL (103 aa). Phosphoserine is present on residues Ser-1140 and Ser-1155. Residues 1160–1220 form a disordered region; sequence PLIDDTDAED…SPLHSLETSL (61 aa). Thr-1165 is subject to Phosphothreonine. Position 1178 is a phosphoserine; by PKA (Ser-1178). Ser-1182 is modified (phosphoserine). Polar residues predominate over residues 1200-1220; the sequence is MNKSATSSSPGSPLHSLETSL.

Belongs to the cation transport ATPase (P-type) (TC 3.A.3) family. Type IIB subfamily. Monomer. Dimer. Oligomer. Calmodulin binding. Interacts with PDZD11. Interacts with SLC35G1 and STIM1; inhibits calcium-transporting ATPase activity after store depletion. Interacts with YWHAE; interacts with the monomeric and dimeric forms of the YWHAE but prefer the monomer form; this interaction inhibits calcium-transporting ATPase activity. Interacts with NPTN; this interaction stabilizes ATP2B1 and increases ATPase activity; this interaction controls T cell calcium homeostasis following T cell activation. Interacts with EPB41; regulates small intestinal calcium absorption through regulation of membrane expression of ATP2B1. As to expression, isoform B: Ubiquitously expressed. Isoform C: Found in brain cortex, skeletal muscle and heart muscle. Isoform D: Has only been found in fetal skeletal muscle. Isoform K: Found in small intestine and liver. Abundantly expressed in the endometrial epithelial cells and glandular epithelial cells in early-proliferative phase and early-secretory phases.

Its subcellular location is the cell membrane. It localises to the basolateral cell membrane. The protein resides in the synapse. It is found in the presynaptic cell membrane. The protein localises to the cytoplasmic vesicle. Its subcellular location is the secretory vesicle. It localises to the synaptic vesicle membrane. It carries out the reaction Ca(2+)(in) + ATP + H2O = Ca(2+)(out) + ADP + phosphate + H(+). In terms of biological role, catalyzes the hydrolysis of ATP coupled with the transport of calcium from the cytoplasm to the extracellular space thereby maintaining intracellular calcium homeostasis. Plays a role in blood pressure regulation through regulation of intracellular calcium concentration and nitric oxide production leading to regulation of vascular smooth muscle cells vasoconstriction. Positively regulates bone mineralization through absorption of calcium from the intestine. Plays dual roles in osteoclast differentiation and survival by regulating RANKL-induced calcium oscillations in preosteoclasts and mediating calcium extrusion in mature osteoclasts. Regulates insulin sensitivity through calcium/calmodulin signaling pathway by regulating AKT1 activation and NOS3 activation in endothelial cells. May play a role in synaptic transmission by modulating calcium and proton dynamics at the synaptic vesicles. This Homo sapiens (Human) protein is Plasma membrane calcium-transporting ATPase 1.